Consider the following 467-residue polypeptide: Probable citrate synthase 2, mitochondrial (467 aa).

Catalysis depends on residues His303, His349, and Asp404.

The protein belongs to the citrate synthase family. As to quaternary structure, homodimer.

Its subcellular location is the mitochondrion matrix. It catalyses the reaction oxaloacetate + acetyl-CoA + H2O = citrate + CoA + H(+). It functions in the pathway carbohydrate metabolism; tricarboxylic acid cycle; isocitrate from oxaloacetate: step 1/2. In Aedes aegypti (Yellowfever mosquito), this protein is Probable citrate synthase 2, mitochondrial.